An 890-amino-acid chain; its full sequence is Alanine--tRNA ligase (890 aa).

The Zn(2+) site is built by H573, H577, C676, and H680.

This sequence belongs to the class-II aminoacyl-tRNA synthetase family. It depends on Zn(2+) as a cofactor.

It localises to the cytoplasm. It carries out the reaction tRNA(Ala) + L-alanine + ATP = L-alanyl-tRNA(Ala) + AMP + diphosphate. Catalyzes the attachment of alanine to tRNA(Ala) in a two-step reaction: alanine is first activated by ATP to form Ala-AMP and then transferred to the acceptor end of tRNA(Ala). Also edits incorrectly charged Ser-tRNA(Ala) and Gly-tRNA(Ala) via its editing domain. In Corynebacterium efficiens (strain DSM 44549 / YS-314 / AJ 12310 / JCM 11189 / NBRC 100395), this protein is Alanine--tRNA ligase.